A 240-amino-acid chain; its full sequence is Thiopurine S-methyltransferase (240 aa).

24–35 (WKDKWVTRHISF) contacts S-adenosyl-L-methionine. F35 lines the substrate pocket. K53 is modified (N6-acetyllysine). Residues L64, E85, 129–130 (SI), and R147 each bind S-adenosyl-L-methionine.

Belongs to the class I-like SAM-binding methyltransferase superfamily. TPMT family. Monomer.

It localises to the cytoplasm. The catalysed reaction is S-adenosyl-L-methionine + a thiopurine = S-adenosyl-L-homocysteine + a thiopurine S-methylether.. The enzyme catalyses mercaptopurine + S-adenosyl-L-methionine = 6-methylthiopurine + S-adenosyl-L-homocysteine + H(+). Its function is as follows. Catalyzes the S-methylation of thiopurine drugs such as 6-mercaptopurine (also called mercaptopurine, 6-MP or its brand name Purinethol) using S-adenosyl-L-methionine as the methyl donor. TPMT activity modulates the cytotoxic effects of thiopurine prodrugs. A natural substrate for this enzyme has yet to be identified. This chain is Thiopurine S-methyltransferase (Tpmt), found in Mus spretus (Western Mediterranean mouse).